The chain runs to 183 residues: UPF0302 protein BH3876 (183 aa).

The protein belongs to the UPF0302 family.

The protein is UPF0302 protein BH3876 of Halalkalibacterium halodurans (strain ATCC BAA-125 / DSM 18197 / FERM 7344 / JCM 9153 / C-125) (Bacillus halodurans).